The primary structure comprises 280 residues: Formyltetrahydrofolate deformylase (280 aa).

Residues Val-8 to Arg-86 form the ACT domain. The active site involves Asp-225.

Belongs to the PurU family. Homohexamer.

It carries out the reaction (6R)-10-formyltetrahydrofolate + H2O = (6S)-5,6,7,8-tetrahydrofolate + formate + H(+). It functions in the pathway purine metabolism; IMP biosynthesis via de novo pathway; formate from 10-formyl-5,6,7,8-tetrahydrofolate: step 1/1. Its activity is regulated as follows. Activated by methionine, inhibited by glycine. Functionally, catalyzes the hydrolysis of 10-formyltetrahydrofolate (formyl-FH4) to formate and tetrahydrofolate (FH4). Provides the major source of formate for the PurT-dependent synthesis of 5'-phosphoribosyl-N-formylglycinamide (FGAR) during aerobic growth. Has a role in regulating the one-carbon pool. The sequence is that of Formyltetrahydrofolate deformylase from Escherichia coli (strain K12).